Reading from the N-terminus, the 388-residue chain is S-adenosylmethionine synthase (388 aa).

His-17 lines the ATP pocket. Asp-19 is a Mg(2+) binding site. Position 45 (Glu-45) interacts with K(+). L-methionine contacts are provided by Glu-58 and Gln-102. Residues 102–112 (QSVHIAQGVDA) form a flexible loop region. ATP contacts are provided by residues 167-169 (DAK), Asp-241, 247-248 (RK), Ala-264, and Lys-268. Asp-241 provides a ligand contact to L-methionine. Residue Lys-272 participates in L-methionine binding.

Belongs to the AdoMet synthase family. In terms of assembly, homotetramer; dimer of dimers. It depends on Mg(2+) as a cofactor. K(+) is required as a cofactor.

The protein resides in the cytoplasm. The enzyme catalyses L-methionine + ATP + H2O = S-adenosyl-L-methionine + phosphate + diphosphate. It participates in amino-acid biosynthesis; S-adenosyl-L-methionine biosynthesis; S-adenosyl-L-methionine from L-methionine: step 1/1. Functionally, catalyzes the formation of S-adenosylmethionine (AdoMet) from methionine and ATP. The overall synthetic reaction is composed of two sequential steps, AdoMet formation and the subsequent tripolyphosphate hydrolysis which occurs prior to release of AdoMet from the enzyme. In Maricaulis maris (strain MCS10) (Caulobacter maris), this protein is S-adenosylmethionine synthase.